Reading from the N-terminus, the 618-residue chain is Glucose starvation modulator protein 1 (618 aa).

Residues 20–48 (CEFCHTKHIQCDVGRPCQNCLKRNIGKFC) constitute a DNA-binding region (zn(2)-C6 fungal-type). Residues 325-352 (ANANTHPSHNAKLESECDSSSHSDADLE) are disordered. Positions 335-352 (AKLESECDSSSHSDADLE) are enriched in basic and acidic residues. The 73-residue stretch at 466–538 (LLDLENMAKL…QIFNELLAFG (73 aa)) folds into the PAS domain.

The protein belongs to the ERT1/acuK family.

Its subcellular location is the nucleus. Functionally, transcription factor which regulates nonfermentable carbon utilization. Binds specifically to 5'-CGGN(8)CGG-3' and 5'-CGGN(9)CGG-3' sequences in the promoter region. The protein is Glucose starvation modulator protein 1 (GSM1) of Saccharomyces cerevisiae (strain ATCC 204508 / S288c) (Baker's yeast).